The primary structure comprises 450 residues: Probable ECA polymerase (450 aa).

11 helical membrane passes run phenylalanine 6 to phenylalanine 26, valine 37 to leucine 57, valine 63 to alanine 83, valine 118 to leucine 138, glycine 155 to leucine 175, alanine 181 to glycine 201, isoleucine 207 to tryptophan 227, methionine 228 to tyrosine 248, leucine 341 to isoleucine 361, tyrosine 378 to alanine 398, and valine 410 to phenylalanine 430.

The protein belongs to the WzyE family. As to quaternary structure, probably part of a complex composed of WzxE, WzyE and WzzE.

It is found in the cell inner membrane. The protein operates within bacterial outer membrane biogenesis; enterobacterial common antigen biosynthesis. Functionally, probably involved in the polymerization of enterobacterial common antigen (ECA) trisaccharide repeat units. This is Probable ECA polymerase from Escherichia coli O127:H6 (strain E2348/69 / EPEC).